Here is an 848-residue protein sequence, read N- to C-terminus: Neuroligin-3 (848 aa).

The signal sequence occupies residues 1–37; the sequence is MWLQLGLPSLSLSPTPTVGRSLCLILWFLSLVLRAST. Residues 38–709 are Extracellular-facing; that stretch reads QAPAPTVNTH…NPRDYSTELS (672 aa). Asn-98 is a glycosylation site (N-linked (GlcNAc...) asparagine). A disulfide bridge links Cys-106 with Cys-141. Residues 169–195 are disordered; sequence CRKGGSGAKKQGEDLADNDGDEDEDIR. Acidic residues predominate over residues 182–194; it reads DLADNDGDEDEDI. 2 cysteine pairs are disulfide-bonded: Cys-340–Cys-351 and Cys-510–Cys-544. A glycan (N-linked (GlcNAc...) asparagine) is linked at Asn-545. Composition is skewed to polar residues over residues 645-656 and 677-689; these read TKVPPPDTTHSS and AYSN…SWNG. The disordered stretch occupies residues 645-691; the sequence is TKVPPPDTTHSSHITRRPNGKTWSTKRPAISPAYSNENAPGSWNGDQ. The chain crosses the membrane as a helical span at residues 710–730; sequence VTIAVGASLLFLNVLAFAALY. Residues 731-848 are Cytoplasmic-facing; sequence YRKDKRRQEP…LPNSHSTTRV (118 aa). The residue at position 745 (Ser-745) is a Phosphoserine. Phosphotyrosine is present on Tyr-792.

This sequence belongs to the type-B carboxylesterase/lipase family. Homodimer, and heterodimer with NLGN1 and NLGN2. Interacts with neurexins NRXN1, NRXN2 and NRXN3. Interaction with neurexins is mediated by heparan sulfate glycan modification on neurexin. Interacts (via its C-terminus) with DLG4/PSD-95 (via PDZ domain 3). Post-translationally, the N-terminus is blocked. Detected in brain and on hippocampus neurons, especially at excitatory synapses. Detected in retina (at protein level). Expressed in brain, spinal cord and dorsal root ganglion.

The protein resides in the cell membrane. Its subcellular location is the synapse. Functionally, cell surface protein involved in cell-cell-interactions via its interactions with neurexin family members. Plays a role in synapse function and synaptic signal transmission, and probably mediates its effects by recruiting and clustering other synaptic proteins. May promote the initial formation of synapses, but is not essential for this. May also play a role in glia-glia or glia-neuron interactions in the developing peripheral nervous system. This is Neuroligin-3 (Nlgn3) from Rattus norvegicus (Rat).